Here is a 373-residue protein sequence, read N- to C-terminus: ATP phosphoribosyltransferase regulatory subunit (373 aa).

It belongs to the class-II aminoacyl-tRNA synthetase family. HisZ subfamily. As to quaternary structure, heteromultimer composed of HisG and HisZ subunits.

Its subcellular location is the cytoplasm. Its pathway is amino-acid biosynthesis; L-histidine biosynthesis; L-histidine from 5-phospho-alpha-D-ribose 1-diphosphate: step 1/9. In terms of biological role, required for the first step of histidine biosynthesis. May allow the feedback regulation of ATP phosphoribosyltransferase activity by histidine. The protein is ATP phosphoribosyltransferase regulatory subunit of Rhizobium etli (strain CIAT 652).